A 64-amino-acid chain; its full sequence is Large ribosomal subunit protein bL35 (64 aa).

The disordered stretch occupies residues 1–28 (MPKMKTHSGAKKRFKLTGSGKLKRQQAN).

It belongs to the bacterial ribosomal protein bL35 family.

The protein is Large ribosomal subunit protein bL35 of Renibacterium salmoninarum (strain ATCC 33209 / DSM 20767 / JCM 11484 / NBRC 15589 / NCIMB 2235).